Consider the following 757-residue polypeptide: Endonuclease MutS2 (757 aa).

Position 321-328 (321-328 (GPNMGGKT)) interacts with ATP. The Smr domain maps to 681–756 (IDIRGMTVEE…GTGVTVVEVK (76 aa)).

Belongs to the DNA mismatch repair MutS family. MutS2 subfamily. In terms of assembly, homodimer. Binds to stalled ribosomes, contacting rRNA.

Its function is as follows. Endonuclease that is involved in the suppression of homologous recombination and thus may have a key role in the control of bacterial genetic diversity. Functionally, acts as a ribosome collision sensor, splitting the ribosome into its 2 subunits. Detects stalled/collided 70S ribosomes which it binds and splits by an ATP-hydrolysis driven conformational change. Acts upstream of the ribosome quality control system (RQC), a ribosome-associated complex that mediates the extraction of incompletely synthesized nascent chains from stalled ribosomes and their subsequent degradation. Probably generates substrates for RQC. The chain is Endonuclease MutS2 from Thermotoga sp. (strain RQ2).